The following is a 47-amino-acid chain: PhoP/PhoQ regulator MgrB (47 aa).

Residues 6–26 form a helical membrane-spanning segment; the sequence is WVVLVVVVLACLLLWAQVFNM.

The protein belongs to the MgrB family. May form homooligomers. Probably interacts with the periplasmic domain of PhoQ.

The protein resides in the cell inner membrane. PhoP-regulated transcription is redox-sensitive, being activated when the periplasm becomes more reducing. MgrB acts between DsbA/DsbB and PhoP/PhoQ in this pathway. Represses PhoP/PhoQ signaling, possibly by binding to the periplasmic domain of PhoQ, altering its activity and that of downstream effector PhoP. This is PhoP/PhoQ regulator MgrB from Escherichia coli O157:H7.